The chain runs to 256 residues: Lysine-rich coiled-coil protein 1 (256 aa).

Disordered stretches follow at residues 61–83 and 141–256; these read QRIP…TEDR and GHST…ILGF. Polar residues-rich tracts occupy residues 64 to 79 and 141 to 153; these read PSGT…SSSQ and GHST…SHRQ. Composition is skewed to basic and acidic residues over residues 161 to 188 and 218 to 227; these read HLEE…DLNK and KNRDVSSKKE. A coiled-coil region spans residues 208–247; it reads TEKLKNRKEKKNRDVSSKKEDRKRRKEKKEQGEERTEEEM.

The sequence is that of Lysine-rich coiled-coil protein 1 (Krcc1) from Rattus norvegicus (Rat).